Here is a 74-residue protein sequence, read N- to C-terminus: SPbeta prophage-derived uncharacterized HTH-type transcriptional regulator YopS (74 aa).

The HTH cro/C1-type domain maps to 11 to 66 (IPELCRKKDITINELSEITGIKKQQLSDYNRLVKVDMSIRTAKRIAAALDCNVEDL). A DNA-binding region (H-T-H motif) is located at residues 22-41 (INELSEITGIKKQQLSDYNR).

The sequence is that of SPbeta prophage-derived uncharacterized HTH-type transcriptional regulator YopS (yopS) from Bacillus subtilis (strain 168).